The following is a 122-amino-acid chain: Large ribosomal subunit protein uL14 (122 aa).

Belongs to the universal ribosomal protein uL14 family. Part of the 50S ribosomal subunit. Forms a cluster with proteins L3 and L19. In the 70S ribosome, L14 and L19 interact and together make contacts with the 16S rRNA in bridges B5 and B8.

Binds to 23S rRNA. Forms part of two intersubunit bridges in the 70S ribosome. The protein is Large ribosomal subunit protein uL14 of Anaeromyxobacter dehalogenans (strain 2CP-1 / ATCC BAA-258).